The sequence spans 143 residues: Peptide methionine sulfoxide reductase MsrB (143 aa).

A MsrB domain is found at 16–139; sequence DAELRRRLTP…NSAALNFESR (124 aa). Residues Cys55, Cys58, Cys104, and Cys107 each contribute to the Zn(2+) site. The active-site Nucleophile is Cys128.

This sequence belongs to the MsrB Met sulfoxide reductase family. It depends on Zn(2+) as a cofactor.

It carries out the reaction L-methionyl-[protein] + [thioredoxin]-disulfide + H2O = L-methionyl-(R)-S-oxide-[protein] + [thioredoxin]-dithiol. This Burkholderia cenocepacia (strain ATCC BAA-245 / DSM 16553 / LMG 16656 / NCTC 13227 / J2315 / CF5610) (Burkholderia cepacia (strain J2315)) protein is Peptide methionine sulfoxide reductase MsrB.